Reading from the N-terminus, the 259-residue chain is Type III pantothenate kinase (259 aa).

6–13 (DCGNTNTV) serves as a coordination point for ATP. 107 to 110 (GPDR) is a substrate binding site. The active-site Proton acceptor is the aspartate 109. Residue aspartate 129 coordinates K(+). Threonine 132 provides a ligand contact to ATP. Residue threonine 184 participates in substrate binding.

This sequence belongs to the type III pantothenate kinase family. As to quaternary structure, homodimer. NH4(+) serves as cofactor. Requires K(+) as cofactor.

Its subcellular location is the cytoplasm. The catalysed reaction is (R)-pantothenate + ATP = (R)-4'-phosphopantothenate + ADP + H(+). It functions in the pathway cofactor biosynthesis; coenzyme A biosynthesis; CoA from (R)-pantothenate: step 1/5. Functionally, catalyzes the phosphorylation of pantothenate (Pan), the first step in CoA biosynthesis. The sequence is that of Type III pantothenate kinase from Ruegeria pomeroyi (strain ATCC 700808 / DSM 15171 / DSS-3) (Silicibacter pomeroyi).